The following is a 67-amino-acid chain: Large ribosomal subunit protein bL35 (67 aa).

Belongs to the bacterial ribosomal protein bL35 family.

The chain is Large ribosomal subunit protein bL35 from Acidiphilium cryptum (strain JF-5).